The primary structure comprises 368 residues: Isopentenyl-diphosphate delta-isomerase (368 aa).

Position 7 to 8 (7 to 8 (RK)) interacts with substrate. FMN is bound by residues threonine 65, 66–68 (GMT), serine 96, and asparagine 125. A substrate-binding site is contributed by 96–98 (SQR). Residue glutamine 160 coordinates substrate. Glutamate 161 serves as a coordination point for Mg(2+). FMN contacts are provided by residues lysine 193, serine 218, threonine 223, 275–277 (GIR), and 296–297 (AL).

The protein belongs to the IPP isomerase type 2 family. In terms of assembly, homooctamer. Dimer of tetramers. FMN serves as cofactor. NADPH is required as a cofactor. Requires Mg(2+) as cofactor.

The protein resides in the cytoplasm. The enzyme catalyses isopentenyl diphosphate = dimethylallyl diphosphate. Its function is as follows. Involved in the biosynthesis of isoprenoids. Catalyzes the 1,3-allylic rearrangement of the homoallylic substrate isopentenyl (IPP) to its allylic isomer, dimethylallyl diphosphate (DMAPP). This Saccharolobus islandicus (strain L.S.2.15 / Lassen #1) (Sulfolobus islandicus) protein is Isopentenyl-diphosphate delta-isomerase.